The sequence spans 240 residues: Ion-translocating oxidoreductase complex subunit E (240 aa).

Helical transmembrane passes span 41-61 (LGLG…VSLV), 71-91 (LPAF…LMQA), 95-115 (ELYQ…VILG), 130-150 (SFDG…LGGL), and 184-204 (GFLL…LIAL).

The protein belongs to the NqrDE/RnfAE family. In terms of assembly, the complex is composed of six subunits: RnfA, RnfB, RnfC, RnfD, RnfE and RnfG.

It localises to the cell inner membrane. Its function is as follows. Part of a membrane-bound complex that couples electron transfer with translocation of ions across the membrane. The sequence is that of Ion-translocating oxidoreductase complex subunit E from Pseudomonas aeruginosa (strain ATCC 15692 / DSM 22644 / CIP 104116 / JCM 14847 / LMG 12228 / 1C / PRS 101 / PAO1).